The primary structure comprises 350 residues: Biotin synthase (350 aa).

The region spanning 41-268 (NEVQISRLLS…LSRVRLSAGR (228 aa)) is the Radical SAM core domain. Cysteine 56, cysteine 60, and cysteine 63 together coordinate [4Fe-4S] cluster. [2Fe-2S] cluster contacts are provided by cysteine 100, cysteine 131, cysteine 191, and arginine 263.

This sequence belongs to the radical SAM superfamily. Biotin synthase family. In terms of assembly, homodimer. [4Fe-4S] cluster is required as a cofactor. Requires [2Fe-2S] cluster as cofactor.

The enzyme catalyses (4R,5S)-dethiobiotin + (sulfur carrier)-SH + 2 reduced [2Fe-2S]-[ferredoxin] + 2 S-adenosyl-L-methionine = (sulfur carrier)-H + biotin + 2 5'-deoxyadenosine + 2 L-methionine + 2 oxidized [2Fe-2S]-[ferredoxin]. It participates in cofactor biosynthesis; biotin biosynthesis; biotin from 7,8-diaminononanoate: step 2/2. Catalyzes the conversion of dethiobiotin (DTB) to biotin by the insertion of a sulfur atom into dethiobiotin via a radical-based mechanism. This Shewanella baltica (strain OS223) protein is Biotin synthase.